The chain runs to 1055 residues: Elongation factor 3 (1055 aa).

Val-45 contributes to the ADP binding site. HEAT repeat units follow at residues 48 to 86 (FTQI…NGAA), 96 to 133 (SAEN…SMNP), 134 to 172 (WASF…SAPF), 176 to 213 (EAMP…LVEN), 218 to 255 (KFVP…APTI), 257 to 290 (LIAP…LVDS), and 296 to 337 (PFLP…VPAE). 2 ABC transporter domains span residues 447-659 (CNIE…SYYQ) and 687-1004 (LKMR…KKAA). Residues Asn-723, Glu-933, Asn-936, and His-962 each coordinate ADP. Residues 1024–1055 (EKKLSAADKRKAKKDRMARRKRGEEVFSDEEL) are disordered. The span at 1033–1044 (RKAKKDRMARRK) shows a compositional bias: basic residues.

Belongs to the ABC transporter superfamily. ABCF family. EF3 subfamily. Interacts with CCH1; the interaction is direct and required for the localization of CCH1 to the cell membrane.

Its subcellular location is the cytoplasm. It is found in the cytosol. The catalysed reaction is ATP + H2O = ADP + phosphate + H(+). It functions in the pathway protein biosynthesis; polypeptide chain elongation. Ribosome-dependent ATPase that functions in cytoplasmic translation elongation. Required for the ATP-dependent release of deacylated tRNA from the ribosomal E-site during protein biosynthesis. Stimulates the eEF1A-dependent binding of aminoacyl-tRNA to the ribosomal A-site, which has reduced affinity for tRNA as long as the E-site is occupied. Assists translation termination by stimulating the release of nascent protein from the ribosome by release factors. Appears to localize calcium-channel protein CCH1 to the plasma membrane. The protein is Elongation factor 3 of Cryptococcus neoformans var. grubii serotype A (strain H99 / ATCC 208821 / CBS 10515 / FGSC 9487) (Filobasidiella neoformans var. grubii).